The chain runs to 258 residues: Regulatory protein RecX (258 aa).

The protein belongs to the RecX family.

It localises to the cytoplasm. Functionally, modulates RecA activity. This is Regulatory protein RecX from Streptococcus pneumoniae (strain P1031).